The chain runs to 80 residues: Cell division protein ZapB (80 aa).

Residues 3–80 (FEVLEQLESK…ALLGKMDEVE (78 aa)) adopt a coiled-coil conformation. Positions 41 to 53 (ANELRSQREELEQ) are enriched in basic and acidic residues. The segment at 41-60 (ANELRSQREELEQKSQQAQQ) is disordered.

This sequence belongs to the ZapB family. As to quaternary structure, homodimer. The ends of the coiled-coil dimer bind to each other, forming polymers. Interacts with FtsZ.

The protein localises to the cytoplasm. Functionally, non-essential, abundant cell division factor that is required for proper Z-ring formation. It is recruited early to the divisome by direct interaction with FtsZ, stimulating Z-ring assembly and thereby promoting cell division earlier in the cell cycle. Its recruitment to the Z-ring requires functional FtsA or ZipA. This is Cell division protein ZapB from Vibrio campbellii (strain ATCC BAA-1116).